Here is a 164-residue protein sequence, read N- to C-terminus: Glutamate uptake regulatory protein (164 aa).

Residues L5–G66 enclose the HTH asnC-type domain. Residues M24–R43 constitute a DNA-binding region (H-T-H motif).

In terms of biological role, represses the secondary, H(+)-coupled glutamate uptake system (Gluemp) genes. In Zymomonas mobilis subsp. mobilis (strain ATCC 10988 / DSM 424 / LMG 404 / NCIMB 8938 / NRRL B-806 / ZM1), this protein is Glutamate uptake regulatory protein (grp).